A 255-amino-acid polypeptide reads, in one-letter code: Uracil-DNA glycosylase (255 aa).

The active-site Proton acceptor is Asp-90.

It belongs to the uracil-DNA glycosylase (UDG) superfamily. UNG family.

It is found in the host nucleus. The enzyme catalyses Hydrolyzes single-stranded DNA or mismatched double-stranded DNA and polynucleotides, releasing free uracil.. Excises uracil residues from the DNA which can arise as a result of misincorporation of dUMP residues by DNA polymerase or deamination of cytosines. Therefore may reduce deleterious uracil incorporation into the viral genome, particularly in terminally differentiated cells which lack DNA repair enzymes. This Equine herpesvirus 2 (strain 86/87) (EHV-2) protein is Uracil-DNA glycosylase.